The sequence spans 243 residues: Small ribosomal subunit protein uS3 (243 aa).

The region spanning 39–110 is the KH type-2 domain; that stretch reads IRGFIQKKYA…QVRINVVEIE (72 aa). The disordered stretch occupies residues 215–243; sequence DQPLPVGASPRRKGSRRPQQFEDRSNDGK. Residues 233–243 show a composition bias toward basic and acidic residues; sequence QQFEDRSNDGK.

This sequence belongs to the universal ribosomal protein uS3 family. Part of the 30S ribosomal subunit. Forms a tight complex with proteins S10 and S14.

Binds the lower part of the 30S subunit head. Binds mRNA in the 70S ribosome, positioning it for translation. The polypeptide is Small ribosomal subunit protein uS3 (Prochlorococcus marinus (strain MIT 9211)).